We begin with the raw amino-acid sequence, 223 residues long: Thymidine kinase (223 aa).

ATP contacts are provided by residues 19–26 (GPMFAGKT) and 96–99 (DEVQ). Residue glutamate 97 is the Proton acceptor of the active site. Residues cysteine 153, cysteine 156, cysteine 191, and histidine 194 each coordinate Zn(2+).

This sequence belongs to the thymidine kinase family. In terms of assembly, homotetramer.

It is found in the cytoplasm. It catalyses the reaction thymidine + ATP = dTMP + ADP + H(+). This chain is Thymidine kinase, found in Ureaplasma urealyticum serovar 10 (strain ATCC 33699 / Western).